Consider the following 471-residue polypeptide: Putative multidrug resistance protein MdtD (471 aa).

Transmembrane regions (helical) follow at residues 12–32 (LWIVAFGFFMQSLDTTIVNTA), 49–69 (MVIVSYVLTVAVMLPASGWMA), 72–92 (IGVRNIFFTAIVLFTLGSLFC), 101–123 (LVMSRVLQGVGGAMMVPVGRLTV), 138–158 (FVTLPGQVGPLLGPALGGILV), 165–185 (WIFLINLPVGIVGAIATLWLM), 195–215 (FDIFGFVLLAAGMATLTLALD), 220–240 (LGISTLTLCLLIVIGIVSILW), 265–285 (IGLFGSFVGRLGSGMLPFMTP), 286–306 (VFLQIGLGFSPFHAGLMMIPM), 342–362 (LVFMAVALMGWYYVLPLVLFF), 393–413 (LLSMIMQLSMSVGVTVAGLLL), and 431–451 (VFLYTYLSMAVIIALPALIFA).

It belongs to the major facilitator superfamily. TCR/Tet family.

It localises to the cell inner membrane. This chain is Putative multidrug resistance protein MdtD, found in Enterobacter sp. (strain 638).